Here is a 328-residue protein sequence, read N- to C-terminus: Endochitinase (328 aa).

An N-terminal signal peptide occupies residues 1-26; sequence MRRHKEVNFVAYLLFSLLVLVSAALA. The region spanning 27-68 is the Chitin-binding type-1 domain; sequence QNCGSQGGGKACASGQCCSKFGWCGNTNDYCGSGNCQSQCPG. 7 disulfides stabilise this stretch: Cys-29-Cys-44, Cys-38-Cys-50, Cys-43-Cys-57, Cys-62-Cys-66, Cys-100-Cys-162, Cys-174-Cys-182, and Cys-281-Cys-313. Catalysis depends on Glu-144, which acts as the Proton donor. The propeptide at 322 to 328 is removed in mature form; it reads ALLVDTL.

Belongs to the glycosyl hydrolase 19 family. Chitinase class I subfamily.

The protein localises to the vacuole. It catalyses the reaction Random endo-hydrolysis of N-acetyl-beta-D-glucosaminide (1-&gt;4)-beta-linkages in chitin and chitodextrins.. Defense against chitin-containing fungal pathogens. The polypeptide is Endochitinase (Solanum tuberosum (Potato)).